The sequence spans 489 residues: Endothelial zinc finger protein induced by tumor necrosis factor alpha (489 aa).

Residues M1–L15 are compositionally biased toward basic and acidic residues. Disordered stretches follow at residues M1–I61 and E98–M122. 13 C2H2-type zinc fingers span residues Y130–H152, F158–H180, Y186–H208, Y214–H236, Y242–H264, Y270–H292, Y298–H320, Y326–H348, F354–H376, Y382–H404, Y410–H432, Y438–H460, and Y466–H488.

The protein belongs to the krueppel C2H2-type zinc-finger protein family. Highly expressed in placenta, followed by brain, testis, pancreas, heart, small intestine, muscle, uterus, prostate and peripheral blood leukocytes. Not detected in liver, lung, colon, stomach, salivary and thyroid gland.

The protein resides in the nucleus. Its function is as follows. May be involved in transcriptional regulation. This chain is Endothelial zinc finger protein induced by tumor necrosis factor alpha (ZNF71), found in Homo sapiens (Human).